The primary structure comprises 443 residues: Xaa-Pro dipeptidase (443 aa).

Positions 246, 257, 339, 384, and 423 each coordinate Mn(2+).

The protein belongs to the peptidase M24B family. Bacterial-type prolidase subfamily. Mn(2+) is required as a cofactor.

It catalyses the reaction Xaa-L-Pro dipeptide + H2O = an L-alpha-amino acid + L-proline. In terms of biological role, splits dipeptides with a prolyl residue in the C-terminal position. The polypeptide is Xaa-Pro dipeptidase (Escherichia coli (strain SMS-3-5 / SECEC)).